The following is a 121-amino-acid chain: MSISQDDILNAVAEMSVLQVVELIKAFEEKFGVTAAAGSAGPAVAAAVVEEQTEFNVMLLEAGEKKVNVIKAVRELTGLGLKEAKAVVDGAPAMVLEAVAKDAADKAKATLEEAGAKVELK.

This sequence belongs to the bacterial ribosomal protein bL12 family. In terms of assembly, homodimer. Part of the ribosomal stalk of the 50S ribosomal subunit. Forms a multimeric L10(L12)X complex, where L10 forms an elongated spine to which 2 to 4 L12 dimers bind in a sequential fashion. Binds GTP-bound translation factors.

Functionally, forms part of the ribosomal stalk which helps the ribosome interact with GTP-bound translation factors. Is thus essential for accurate translation. This is Large ribosomal subunit protein bL12 from Pseudomonas savastanoi pv. phaseolicola (strain 1448A / Race 6) (Pseudomonas syringae pv. phaseolicola (strain 1448A / Race 6)).